Consider the following 620-residue polypeptide: Cryptochrome-1 (620 aa).

One can recognise a Photolyase/cryptochrome alpha/beta domain in the interval 3–132; the sequence is VNAVHWFRKG…EVIVRISHTL (130 aa). 3 short sequence motifs (LIR) span residues 50–54, 82–87, and 151–156; these read NRWRF, DVFPRL, and KRFQTL. Ser-252 serves as a coordination point for FAD. 4 short sequence motifs (LIR) span residues 255 to 260, 271 to 276, 285 to 290, and 335 to 339; these read LRFGCL, DLYKKV, SLYGQL, and TGFPW. Gln-289 is an FAD binding site. His-355 is an FAD binding site. The short motif at 379–384 is the LIR 8 element; that stretch reads KVFEEL. 387 to 389 serves as a coordination point for FAD; that stretch reads DAD. 5 short sequence motifs (LIR) span residues 395–400, 411–416, 430–435, 486–491, and 492–497; these read GSWMWL, HCYCPV, RRYLPV, QIYQQL, and SRYRGL. Positions 593–620 are disordered; the sequence is TGISAGKRPNPEEETQSVGPKVQRQSTN.

Belongs to the DNA photolyase class-1 family. Component of the circadian core oscillator, which includes the CRY proteins, CLOCK or NPAS2, BMAL1 or BMAL2, CSNK1E, and the PER proteins. FAD serves as cofactor. (6R)-5,10-methylene-5,6,7,8-tetrahydrofolate is required as a cofactor. As to expression, expressed in the retina.

It is found in the cytoplasm. Its subcellular location is the nucleus. Transcriptional repressor which forms a core component of the circadian clock. The circadian clock, an internal time-keeping system, regulates various physiological processes through the generation of approximately 24 hour circadian rhythms in gene expression, which are translated into rhythms in metabolism and behavior. It is derived from the Latin roots 'circa' (about) and 'diem' (day) and acts as an important regulator of a wide array of physiological functions including metabolism, sleep, body temperature, blood pressure, endocrine, immune, cardiovascular, and renal function. Consists of two major components: the central clock, residing in the suprachiasmatic nucleus (SCN) of the brain, and the peripheral clocks that are present in nearly every tissue and organ system. Both the central and peripheral clocks can be reset by environmental cues, also known as Zeitgebers (German for 'timegivers'). The predominant Zeitgeber for the central clock is light, which is sensed by retina and signals directly to the SCN. The central clock entrains the peripheral clocks through neuronal and hormonal signals, body temperature and feeding-related cues, aligning all clocks with the external light/dark cycle. Circadian rhythms allow an organism to achieve temporal homeostasis with its environment at the molecular level by regulating gene expression to create a peak of protein expression once every 24 hours to control when a particular physiological process is most active with respect to the solar day. Transcription and translation of core clock components (CLOCK, NPAS2, BMAL1, BMAL2, PER1, PER2, PER3, CRY1 and CRY2) plays a critical role in rhythm generation, whereas delays imposed by post-translational modifications (PTMs) are important for determining the period (tau) of the rhythms (tau refers to the period of a rhythm and is the length, in time, of one complete cycle). A diurnal rhythm is synchronized with the day/night cycle, while the ultradian and infradian rhythms have a period shorter and longer than 24 hours, respectively. Disruptions in the circadian rhythms contribute to the pathology of cardiovascular diseases, cancer, metabolic syndromes and aging. A transcription/translation feedback loop (TTFL) forms the core of the molecular circadian clock mechanism. Transcription factors, CLOCK or NPAS2 and BMAL1 or BMAL2, form the positive limb of the feedback loop, act in the form of a heterodimer and activate the transcription of core clock genes and clock-controlled genes (involved in key metabolic processes), harboring E-box elements (5'-CACGTG-3') within their promoters. The core clock genes: PER1/2/3 and CRY1/2 which are transcriptional repressors form the negative limb of the feedback loop and interact with the CLOCK|NPAS2-BMAL1|BMAL2 heterodimer inhibiting its activity and thereby negatively regulating their own expression. This heterodimer also activates nuclear receptors NR1D1/2 and RORA/B/G, which form a second feedback loop and which activate and repress BMAL1 transcription, respectively. CRY1 and CRY2 have redundant functions but also differential and selective contributions at least in defining the pace of the SCN circadian clock and its circadian transcriptional outputs. More potent transcriptional repressor in cerebellum and liver than CRY2, though more effective in lengthening the period of the SCN oscillator. On its side, CRY2 seems to play a critical role in tuning SCN circadian period by opposing the action of CRY1. With CRY2, is dispensable for circadian rhythm generation but necessary for the development of intercellular networks for rhythm synchrony. Capable of translocating circadian clock core proteins such as PER proteins to the nucleus. Interacts with CLOCK-BMAL1 independently of PER proteins and is found at CLOCK-BMAL1-bound sites, suggesting that CRY may act as a molecular gatekeeper to maintain CLOCK-BMAL1 in a poised and repressed state until the proper time for transcriptional activation. The polypeptide is Cryptochrome-1 (CRY1) (Erithacus rubecula (European robin)).